Reading from the N-terminus, the 332-residue chain is Probable L-asparaginase (332 aa).

Residues 6–332 (PTIALLATGG…AKIQEMFEEY (327 aa)) enclose the Asparaginase/glutaminase domain. Catalysis depends on Thr16, which acts as the O-isoaspartyl threonine intermediate. Substrate is bound by residues Ser62 and 95 to 96 (TD).

This sequence belongs to the asparaginase 1 family.

Its subcellular location is the cytoplasm. It carries out the reaction L-asparagine + H2O = L-aspartate + NH4(+). This is Probable L-asparaginase (ansA) from Helicobacter pylori (strain J99 / ATCC 700824) (Campylobacter pylori J99).